A 217-amino-acid chain; its full sequence is MEMFTVFLFYMFSLVLANQEERLPNKCEVCKLLTVELQDALDKTGRSKEVVELGEVLDTGKRRRKIKYNTSEMRLTEAMDNICERILQYKVHAERPGSLRYAKGTSQTMNTLKNLVEKGVKVELGVPYELWDEPTVEVAELKRQCETMLEEHEEVVEDWYFHHQDKGLERFFCEAHVLKDSDQECLTEIWKGDMGMKGSEEESEGKDGKETHDAGEL.

The first 27 residues, 1–27 (MEMFTVFLFYMFSLVLANQEERLPNKC), serve as a signal peptide directing secretion. 3 disulfide bridges follow: C27-C185, C30-C173, and C83-C145. The disordered stretch occupies residues 194-217 (MGMKGSEEESEGKDGKETHDAGEL). Over residues 205–217 (GKDGKETHDAGEL) the composition is skewed to basic and acidic residues.

The protein belongs to the canopy family.

The protein resides in the secreted. The sequence is that of Protein canopy 4 (cnpy4) from Danio rerio (Zebrafish).